We begin with the raw amino-acid sequence, 146 residues long: 3-dehydroquinate dehydratase (146 aa).

The active-site Proton acceptor is the Tyr-22. The substrate site is built by Asn-73, His-79, and Asp-86. His-99 serves as the catalytic Proton donor. Residues 100-101 (LS) and Arg-110 each bind substrate.

Belongs to the type-II 3-dehydroquinase family. In terms of assembly, homododecamer.

The catalysed reaction is 3-dehydroquinate = 3-dehydroshikimate + H2O. The protein operates within metabolic intermediate biosynthesis; chorismate biosynthesis; chorismate from D-erythrose 4-phosphate and phosphoenolpyruvate: step 3/7. Catalyzes a trans-dehydration via an enolate intermediate. This is 3-dehydroquinate dehydratase from Synechococcus sp. (strain CC9902).